A 307-amino-acid chain; its full sequence is Phosphoribosylaminoimidazole-succinocarboxamide synthase (307 aa).

Belongs to the SAICAR synthetase family.

The enzyme catalyses 5-amino-1-(5-phospho-D-ribosyl)imidazole-4-carboxylate + L-aspartate + ATP = (2S)-2-[5-amino-1-(5-phospho-beta-D-ribosyl)imidazole-4-carboxamido]succinate + ADP + phosphate + 2 H(+). It participates in purine metabolism; IMP biosynthesis via de novo pathway; 5-amino-1-(5-phospho-D-ribosyl)imidazole-4-carboxamide from 5-amino-1-(5-phospho-D-ribosyl)imidazole-4-carboxylate: step 1/2. The chain is Phosphoribosylaminoimidazole-succinocarboxamide synthase from Thermobifida fusca (strain YX).